Reading from the N-terminus, the 712-residue chain is Polyribonucleotide nucleotidyltransferase (712 aa).

Positions 487 and 493 each coordinate Mg(2+). Residues 554 to 613 (PKILTMQINPEKIREVIGPSGKQINKIIDETGVKIDIEQDGTIFISSVNEAMNQKAKQII) enclose the KH domain. Positions 623 to 691 (GQIYLGKVKR…KQGRVNLSRK (69 aa)) constitute an S1 motif domain.

Belongs to the polyribonucleotide nucleotidyltransferase family. Mg(2+) serves as cofactor.

It localises to the cytoplasm. It catalyses the reaction RNA(n+1) + phosphate = RNA(n) + a ribonucleoside 5'-diphosphate. Involved in mRNA degradation. Catalyzes the phosphorolysis of single-stranded polyribonucleotides processively in the 3'- to 5'-direction. This chain is Polyribonucleotide nucleotidyltransferase, found in Geobacillus sp. (strain WCH70).